Consider the following 131-residue polypeptide: Small ribosomal subunit protein uS8 (131 aa).

The protein belongs to the universal ribosomal protein uS8 family. Part of the 30S ribosomal subunit. Contacts proteins S5 and S12.

In terms of biological role, one of the primary rRNA binding proteins, it binds directly to 16S rRNA central domain where it helps coordinate assembly of the platform of the 30S subunit. This is Small ribosomal subunit protein uS8 from Variovorax paradoxus (strain S110).